Consider the following 209-residue polypeptide: rRNA N(6)-adenosine-methyltransferase METTL5 (209 aa).

Residues Gln-28, Thr-31, Gly-59, Cys-62, Val-64, Asp-81, and 108–109 (DV) contribute to the S-adenosyl-L-methionine site.

The protein belongs to the methyltransferase superfamily. PrmA family. As to quaternary structure, heterodimer; heterodimerizes with TRMT112. In terms of tissue distribution, expressed from very early development (8 post-conceptual weeks) and expression persists through adulthood in multiple substructures of the brain, including the cerebellar cortex, hippocampus, and striatum.

The protein resides in the nucleus. The protein localises to the presynapse. Its subcellular location is the postsynapse. It catalyses the reaction adenosine(1832) in 18S rRNA + S-adenosyl-L-methionine = N(6)-methyladenosine(1832) in 18S rRNA + S-adenosyl-L-homocysteine + H(+). Its activity is regulated as follows. rRNA N6-adenosine-methyltransferase activity is inhibited by zinc. Its function is as follows. Catalytic subunit of a heterodimer with TRMT112, which specifically methylates the 6th position of adenine in position 1832 of 18S rRNA. N6-methylation of adenine(1832) in 18S rRNA resides in the decoding center of 18S rRNA and is required for translation and embryonic stem cells (ESCs) pluripotency and differentiation. The protein is rRNA N(6)-adenosine-methyltransferase METTL5 of Homo sapiens (Human).